We begin with the raw amino-acid sequence, 456 residues long: Bifunctional protein GlmU (456 aa).

The tract at residues 1–229 is pyrophosphorylase; it reads MTKKALSAVI…VMEVEGANNR (229 aa). Residues 11–14, K25, Q76, 81–82, 103–105, G140, E154, N169, and N227 contribute to the UDP-N-acetyl-alpha-D-glucosamine site; these read LAAG, GT, and YGD. D105 serves as a coordination point for Mg(2+). A Mg(2+)-binding site is contributed by N227. The tract at residues 230 to 250 is linker; the sequence is LQLAALERYFQNKQASKLLLE. The N-acetyltransferase stretch occupies residues 251–456; that stretch reads GVMIYDPARF…QGWQRPIKKK (206 aa). UDP-N-acetyl-alpha-D-glucosamine contacts are provided by R333 and K351. H363 serves as the catalytic Proton acceptor. UDP-N-acetyl-alpha-D-glucosamine-binding residues include Y366 and N377. Acetyl-CoA contacts are provided by residues A380, 386–387, S405, A423, and R440; that span reads NY.

This sequence in the N-terminal section; belongs to the N-acetylglucosamine-1-phosphate uridyltransferase family. It in the C-terminal section; belongs to the transferase hexapeptide repeat family. As to quaternary structure, homotrimer. Mg(2+) is required as a cofactor.

It is found in the cytoplasm. The catalysed reaction is alpha-D-glucosamine 1-phosphate + acetyl-CoA = N-acetyl-alpha-D-glucosamine 1-phosphate + CoA + H(+). It carries out the reaction N-acetyl-alpha-D-glucosamine 1-phosphate + UTP + H(+) = UDP-N-acetyl-alpha-D-glucosamine + diphosphate. It functions in the pathway nucleotide-sugar biosynthesis; UDP-N-acetyl-alpha-D-glucosamine biosynthesis; N-acetyl-alpha-D-glucosamine 1-phosphate from alpha-D-glucosamine 6-phosphate (route II): step 2/2. The protein operates within nucleotide-sugar biosynthesis; UDP-N-acetyl-alpha-D-glucosamine biosynthesis; UDP-N-acetyl-alpha-D-glucosamine from N-acetyl-alpha-D-glucosamine 1-phosphate: step 1/1. Its pathway is bacterial outer membrane biogenesis; LPS lipid A biosynthesis. Functionally, catalyzes the last two sequential reactions in the de novo biosynthetic pathway for UDP-N-acetylglucosamine (UDP-GlcNAc). The C-terminal domain catalyzes the transfer of acetyl group from acetyl coenzyme A to glucosamine-1-phosphate (GlcN-1-P) to produce N-acetylglucosamine-1-phosphate (GlcNAc-1-P), which is converted into UDP-GlcNAc by the transfer of uridine 5-monophosphate (from uridine 5-triphosphate), a reaction catalyzed by the N-terminal domain. The sequence is that of Bifunctional protein GlmU from Haemophilus influenzae (strain 86-028NP).